A 152-amino-acid polypeptide reads, in one-letter code: Transcriptional regulator MraZ (152 aa).

2 SpoVT-AbrB domains span residues 5–52 and 81–124; these read ASAI…PLHE and AQDC…EESA.

The protein belongs to the MraZ family. Forms oligomers.

The protein localises to the cytoplasm. Its subcellular location is the nucleoid. The chain is Transcriptional regulator MraZ from Shewanella frigidimarina (strain NCIMB 400).